A 348-amino-acid chain; its full sequence is Terpene cyclase ctvD (348 aa).

The chain crosses the membrane as a helical span at residues 2–22 (ALSAYFLLCLSVLGLDAIYGF). N-linked (GlcNAc...) asparagine glycosylation is present at Asn-51. Transmembrane regions (helical) follow at residues 77-97 (PGLS…WVAI), 116-136 (LFAM…WCAI), 161-181 (LIPI…LLPE), 191-211 (QIAI…HWGL), 235-255 (FAFV…LTLI), 283-303 (GLWF…LWAM), and 323-343 (LKVG…WLLW).

The protein belongs to the membrane-bound ascI terpene cyclase family.

It is found in the membrane. It participates in mycotoxin biosynthesis. Its function is as follows. Hydrolase; part of the gene cluster that mediates the biosynthesis of citreoviridin, an inhibitor of the of F1-ATPase beta-subunit. The HR-PKS ctvA accepts acetyl-CoA as the starter unit and catalyzes eight iterations of malonyl-CoA extension and four iterations of SAM-dependent methylation at C4, C12, C14, and C16. The KR and DH domains selectively act on the first six iterations to generate the hexaene chain. In the last three iterations, the KR and DH domains terminate their functions to yield a beta,delta-diketo ester moiety, which then undergoes intramolecular cyclization to yield an alpha-pyrone intermediate. Subsequently, ctvB methylates the alpha-pyrone hydroxyl group to generate citreomontanin. In order to form the tetrahydrofuran ring with the correct stereochemistry, the terminal alkenes of citreomontanin need to undergo isomerization to yield a (17Z)-hexaene, a step that could be catalyzed by ctvC. The (17Z)-hexaene then undergoes bisepoxidation by ctvC to form a (17R,16R,15S,14R)-bisepoxide moiety. Lastly, ctvD acts as a regioselective hydrolase to form the tetrahydrofuran ring with the substituents in the correct absolute configuration, completing the biosynthesis of citreoviridin. In Aspergillus terreus (strain NIH 2624 / FGSC A1156), this protein is Terpene cyclase ctvD.